A 145-amino-acid polypeptide reads, in one-letter code: 3-hydroxyacyl-[acyl-carrier-protein] dehydratase FabZ (145 aa).

H52 is a catalytic residue.

This sequence belongs to the thioester dehydratase family. FabZ subfamily.

Its subcellular location is the cytoplasm. The enzyme catalyses a (3R)-hydroxyacyl-[ACP] = a (2E)-enoyl-[ACP] + H2O. Functionally, involved in unsaturated fatty acids biosynthesis. Catalyzes the dehydration of short chain beta-hydroxyacyl-ACPs and long chain saturated and unsaturated beta-hydroxyacyl-ACPs. This Deinococcus radiodurans (strain ATCC 13939 / DSM 20539 / JCM 16871 / CCUG 27074 / LMG 4051 / NBRC 15346 / NCIMB 9279 / VKM B-1422 / R1) protein is 3-hydroxyacyl-[acyl-carrier-protein] dehydratase FabZ.